An 881-amino-acid polypeptide reads, in one-letter code: Serine/threonine-protein phosphatase BSL1 (881 aa).

3 Kelch repeats span residues 60–109 (GSSS…AVGT), 269–320 (RLHV…DQDP), and 338–385 (RIYV…PRFS). Disordered stretches follow at residues 368–407 (SPLL…LSLD) and 436–464 (AGTL…ANEG). Polar residues-rich tracts occupy residues 374–383 (DRTQQSSTPR) and 445–460 (TSDA…TDGT). Residue Ser491 is modified to Phosphoserine. Residues 503 to 522 (VPMNNSDVPQPTKKFTRQKS) form a disordered region. Asp584, His586, Asp618, and Asn650 together coordinate Mn(2+). Catalysis depends on His651, which acts as the Proton donor. Mn(2+) contacts are provided by His703 and His782. Positions 837–881 (ILSPENSPEHSGDDAWMQELNIQRPPTPTRGRPQPDFDRSSLAYI) are disordered. Ser839 is subject to Phosphoserine.

This sequence belongs to the PPP phosphatase family. BSU subfamily. Interacts with CDG1 and CDL1. The cofactor is Mn(2+). As to expression, expressed in mature cauline leaves and at the tip of influorescence, including flowers. Expressed at lower level in young tissues relative to older ones.

The protein resides in the nucleus. It catalyses the reaction O-phospho-L-seryl-[protein] + H2O = L-seryl-[protein] + phosphate. The catalysed reaction is O-phospho-L-threonyl-[protein] + H2O = L-threonyl-[protein] + phosphate. Its function is as follows. Phosphatase involved in elongation process, probably by acting as a regulator of brassinolide signaling. In Arabidopsis thaliana (Mouse-ear cress), this protein is Serine/threonine-protein phosphatase BSL1 (BSL1).